The chain runs to 374 residues: Outer membrane protein assembly factor BamC (374 aa).

The N-terminal stretch at 1 to 22 (MSKFYKSGRVTTAVIVALSLSA) is a signal peptide. Cys-23 carries the N-palmitoyl cysteine lipid modification. A lipid anchor (S-diacylglycerol cysteine) is attached at Cys-23.

This sequence belongs to the BamC family. As to quaternary structure, part of the Bam complex.

The protein resides in the cell outer membrane. Functionally, part of the outer membrane protein assembly complex, which is involved in assembly and insertion of beta-barrel proteins into the outer membrane. The protein is Outer membrane protein assembly factor BamC of Psychromonas ingrahamii (strain DSM 17664 / CCUG 51855 / 37).